Here is a 248-residue protein sequence, read N- to C-terminus: Phosphoribosyl isomerase A (248 aa).

Asp14 (proton acceptor) is an active-site residue. Asp133 (proton donor) is an active-site residue.

It belongs to the HisA/HisF family.

The protein localises to the cytoplasm. The enzyme catalyses 1-(5-phospho-beta-D-ribosyl)-5-[(5-phospho-beta-D-ribosylamino)methylideneamino]imidazole-4-carboxamide = 5-[(5-phospho-1-deoxy-D-ribulos-1-ylimino)methylamino]-1-(5-phospho-beta-D-ribosyl)imidazole-4-carboxamide. It carries out the reaction N-(5-phospho-beta-D-ribosyl)anthranilate = 1-(2-carboxyphenylamino)-1-deoxy-D-ribulose 5-phosphate. It functions in the pathway amino-acid biosynthesis; L-histidine biosynthesis; L-histidine from 5-phospho-alpha-D-ribose 1-diphosphate: step 4/9. Its pathway is amino-acid biosynthesis; L-tryptophan biosynthesis; L-tryptophan from chorismate: step 3/5. Functionally, involved in both the histidine and tryptophan biosynthetic pathways. This chain is Phosphoribosyl isomerase A, found in Mycobacterium sp. (strain JLS).